The sequence spans 192 residues: Glutaredoxin-C9 (192 aa).

Residues 89 to 191 (YERVARMASG…PLLKQAGALW (103 aa)) enclose the Glutaredoxin domain. An intrachain disulfide couples Cys109 to Cys112. A Responsive for interaction with TGA factors motif is present at residues 189–192 (ALWL).

It belongs to the glutaredoxin family. CC-type subfamily.

It is found in the cytoplasm. Its subcellular location is the nucleus. In terms of biological role, has a glutathione-disulfide oxidoreductase activity in the presence of NADPH and glutathione reductase. Reduces low molecular weight disulfides and proteins. In Oryza sativa subsp. japonica (Rice), this protein is Glutaredoxin-C9 (GRXC9).